The primary structure comprises 396 residues: 1-deoxy-D-xylulose 5-phosphate reductoisomerase (396 aa).

5 residues coordinate NADPH: Thr-13, Gly-14, Ser-15, Ile-16, and Asn-127. 1-deoxy-D-xylulose 5-phosphate is bound at residue Lys-128. Glu-129 is a binding site for NADPH. Residue Asp-153 coordinates Mn(2+). Residues Ser-154, Glu-155, Ser-184, and His-207 each contribute to the 1-deoxy-D-xylulose 5-phosphate site. Glu-155 contributes to the Mn(2+) binding site. NADPH is bound at residue Gly-213. The 1-deoxy-D-xylulose 5-phosphate site is built by Ser-220, Asn-225, Lys-226, and Glu-229. Mn(2+) is bound at residue Glu-229.

It belongs to the DXR family. Requires Mg(2+) as cofactor. Mn(2+) serves as cofactor.

It catalyses the reaction 2-C-methyl-D-erythritol 4-phosphate + NADP(+) = 1-deoxy-D-xylulose 5-phosphate + NADPH + H(+). It participates in isoprenoid biosynthesis; isopentenyl diphosphate biosynthesis via DXP pathway; isopentenyl diphosphate from 1-deoxy-D-xylulose 5-phosphate: step 1/6. In terms of biological role, catalyzes the NADPH-dependent rearrangement and reduction of 1-deoxy-D-xylulose-5-phosphate (DXP) to 2-C-methyl-D-erythritol 4-phosphate (MEP). This chain is 1-deoxy-D-xylulose 5-phosphate reductoisomerase, found in Pseudomonas aeruginosa (strain UCBPP-PA14).